The chain runs to 148 residues: tRNA-specific adenosine deaminase (148 aa).

A CMP/dCMP-type deaminase domain is found at 1 to 116; the sequence is MEQALKQARL…SNLRYFNSSA (116 aa). His-48 serves as a coordination point for Zn(2+). Glu-50 serves as the catalytic Proton donor. Zn(2+) contacts are provided by Cys-78 and Cys-81.

It belongs to the cytidine and deoxycytidylate deaminase family. As to quaternary structure, homodimer. Requires Zn(2+) as cofactor.

The catalysed reaction is adenosine(34) in tRNA + H2O + H(+) = inosine(34) in tRNA + NH4(+). Functionally, catalyzes the deamination of adenosine to inosine at the wobble position 34 of tRNA(Arg2). The sequence is that of tRNA-specific adenosine deaminase from Rickettsia typhi (strain ATCC VR-144 / Wilmington).